We begin with the raw amino-acid sequence, 404 residues long: Zinc finger protein zfs1 (404 aa).

A compositionally biased stretch (polar residues) spans 134-149 (SYLHSGSSPHGNTSNH). Disordered regions lie at residues 134-168 (SYLHSGSSPHGNTSNHPSPISSLESLPSRSSTGSG) and 259-322 (SNAS…APNG). The span at 150–168 (PSPISSLESLPSRSSTGSG) shows a compositional bias: low complexity. The span at 259-283 (SNASIRNAPSNLSKQFSPSGNSPLT) shows a compositional bias: polar residues. Low complexity predominate over residues 304–317 (GSASHPHGSGSSNG). 2 C3H1-type zinc fingers span residues 326 to 354 (LYKTEPCKNWQISGTCRYGSKCQFAHGNQ) and 364 to 392 (KYKSERCRSFMMYGYCPYGLRCCFLHDES).

As to quaternary structure, interacts with moc3.

It localises to the cytoplasm. The protein resides in the nucleus. Binds to specific AU-rich elements (ARE) in the 3'-untranslated region of target mRNAs and promotes their degradation. Binds to ARE present in the arz1 mRNA and stimulates the rate of arz1 mRNA decay. Required for coordination of septum formation with exit from mitosis. Involved in the mating response pathway. Induces sexual development and ascus formation. The chain is Zinc finger protein zfs1 (zfs1) from Schizosaccharomyces pombe (strain 972 / ATCC 24843) (Fission yeast).